The sequence spans 146 residues: Basic phospholipase A2 (146 aa).

An N-terminal signal peptide occupies residues 1 to 21 (MYPAHLLVLLAVCVSLLGAAS). A propeptide spanning residues 22-27 (IPPLPL) is cleaved from the precursor. Cystine bridges form between Cys-38/Cys-98, Cys-54/Cys-145, Cys-56/Cys-72, Cys-71/Cys-126, Cys-78/Cys-119, Cys-87/Cys-112, and Cys-105/Cys-117. Ca(2+) contacts are provided by Tyr-55, Gly-57, and Gly-59. The active site involves His-75. Residue Asp-76 participates in Ca(2+) binding. Residue Asp-120 is part of the active site.

It belongs to the phospholipase A2 family. Group I subfamily. D49 sub-subfamily. It depends on Ca(2+) as a cofactor. As to expression, expressed by the venom gland.

Its subcellular location is the secreted. The catalysed reaction is a 1,2-diacyl-sn-glycero-3-phosphocholine + H2O = a 1-acyl-sn-glycero-3-phosphocholine + a fatty acid + H(+). Snake venom phospholipase A2 (PLA2) that inhibits neuromuscular transmission by blocking acetylcholine release from the nerve termini. PLA2 catalyzes the calcium-dependent hydrolysis of the 2-acyl groups in 3-sn-phosphoglycerides. In Hydrophis hardwickii (Hardwick's spine-bellied seasnake), this protein is Basic phospholipase A2.